Consider the following 914-residue polypeptide: Golgin candidate 6 (914 aa).

2 coiled-coil regions span residues I723–G837 and E863–I901. The residue at position 911 (S911) is a Phosphoserine.

It is found in the golgi apparatus. It localises to the golgi stack. Functionally, golgi matrix protein playing a role in tethering of vesicles to Golgi membranes and in maintaining the overall structure of the Golgi apparatus. Functions in the anterograde transport of storage protein precursors from the endoplasmic reticulum (ER) to the Golgi complex. The chain is Golgin candidate 6 (GC6) from Arabidopsis thaliana (Mouse-ear cress).